Reading from the N-terminus, the 92-residue chain is Arrestin-C (92 aa).

The protein belongs to the arrestin family. Homodimer; disulfide-linked in response to retinal illumination. Interacts with CXCR4; the interaction is dependent on the C-terminal phosphorylation of CXCR4 and modulates the calcium ion mobilization activity of CXCR4. Interacts with GPR84. Retina and pineal gland.

Its subcellular location is the photoreceptor inner segment. The protein resides in the cell projection. It localises to the cilium. It is found in the photoreceptor outer segment. May play a role in an as yet undefined retina-specific signal transduction. Could bind to photoactivated-phosphorylated red/green opsins. The chain is Arrestin-C (Arr3) from Rattus norvegicus (Rat).